Consider the following 82-residue polypeptide: RNA-binding protein Hfq (82 aa).

One can recognise a Sm domain in the interval 9 to 68 (DPFLNTLRKEHVPVSIYLVNGIKLQGKVDSFDQYVIMLKNTVSQMVYKHAISTIVPGRPV).

This sequence belongs to the Hfq family. In terms of assembly, homohexamer.

RNA chaperone that binds small regulatory RNA (sRNAs) and mRNAs to facilitate mRNA translational regulation in response to envelope stress, environmental stress and changes in metabolite concentrations. Also binds with high specificity to tRNAs. The polypeptide is RNA-binding protein Hfq (Methylococcus capsulatus (strain ATCC 33009 / NCIMB 11132 / Bath)).